The primary structure comprises 938 residues: Bifunctional glutamine synthetase adenylyltransferase/adenylyl-removing enzyme (938 aa).

Residues 1 to 457 (MLEADAARLK…HFDHVFGDPS (457 aa)) form an adenylyl removase region. Positions 460 to 938 (AHTLDSMWAA…ALWTIVFGSA (479 aa)) are adenylyl transferase.

The protein belongs to the GlnE family. It depends on Mg(2+) as a cofactor.

The enzyme catalyses [glutamine synthetase]-O(4)-(5'-adenylyl)-L-tyrosine + phosphate = [glutamine synthetase]-L-tyrosine + ADP. The catalysed reaction is [glutamine synthetase]-L-tyrosine + ATP = [glutamine synthetase]-O(4)-(5'-adenylyl)-L-tyrosine + diphosphate. In terms of biological role, involved in the regulation of glutamine synthetase GlnA, a key enzyme in the process to assimilate ammonia. When cellular nitrogen levels are high, the C-terminal adenylyl transferase (AT) inactivates GlnA by covalent transfer of an adenylyl group from ATP to specific tyrosine residue of GlnA, thus reducing its activity. Conversely, when nitrogen levels are low, the N-terminal adenylyl removase (AR) activates GlnA by removing the adenylyl group by phosphorolysis, increasing its activity. The regulatory region of GlnE binds the signal transduction protein PII (GlnB) which indicates the nitrogen status of the cell. The chain is Bifunctional glutamine synthetase adenylyltransferase/adenylyl-removing enzyme from Aromatoleum aromaticum (strain DSM 19018 / LMG 30748 / EbN1) (Azoarcus sp. (strain EbN1)).